Consider the following 743-residue polypeptide: Ovocleidin-116 (743 aa).

A signal peptide spans 1-18 (MRATLFCLCLCLLGTVLP). A disulfide bond links Cys31 and Cys42. Asn62 carries an N-linked (GlcNAc...) asparagine glycan. Residues 68–225 (KEEGDHQGTI…GTMGTGDSAI (158 aa)) are disordered. Polar residues predominate over residues 129–141 (DSNSVYPTSTSVE). The span at 169 to 179 (GPHGDGDGGNG) shows a compositional bias: gly residues. An N-linked (GlcNAc...) asparagine; partial glycan is attached at Asn293. Disordered stretches follow at residues 333 to 356 (GDSVTSRPVGHPSVGNSGDGATEI), 385 to 454 (SGKG…GPER), 505 to 534 (ARTQPEVASAPSTVGKAAPERHRNRAQQEV), 549 to 577 (RHRARVRPESARLGQAARPEVAPAPSTGG), 628 to 649 (DPWVWGSAHPQAQHTRGSTVAG), and 692 to 743 (SGVG…RQSL). Residues 402–420 (ATMTTRGGRGTASSGLTTG) show a composition bias toward low complexity. A compositionally biased stretch (polar residues) spans 421–431 (DCSTAASTPSR). Residues 549-558 (RHRARVRPES) show a composition bias toward basic and acidic residues.

Belongs to the osteoregulin family. Asn-62 is fully glycosylated, whereas only less than 10% of Asn-293 seem to be glycosylated. In the eggshell, expressed mainly in the palisade and mammillary layers. Expression also detected in the hypertrophic zone of the epiphyseal growth plate, and in cortical and medullary bone (at protein level). Highly expressed in uterus. Not detected in the proximal oviduct, liver, magnum, duodenum and kidney.

It is found in the secreted. The protein localises to the extracellular space. Its subcellular location is the extracellular matrix. Its function is as follows. Major component of the eggshell matrix. May play an important role in the regulation of calcite growth during eggshell calcification. May also regulate the mineralization process in developing and growing bones. The polypeptide is Ovocleidin-116 (Gallus gallus (Chicken)).